A 586-amino-acid chain; its full sequence is Aspartate--tRNA(Asp/Asn) ligase (586 aa).

Position 176 (Glu-176) interacts with L-aspartate. The segment at 200–203 (QIFK) is aspartate. Arg-222 is a binding site for L-aspartate. ATP is bound by residues 222 to 224 (RDE) and Gln-231. His-449 is an L-aspartate binding site. Glu-483 is an ATP binding site. Arg-490 provides a ligand contact to L-aspartate. 535 to 538 (GIDR) serves as a coordination point for ATP.

Belongs to the class-II aminoacyl-tRNA synthetase family. Type 1 subfamily. Homodimer.

The protein localises to the cytoplasm. The enzyme catalyses tRNA(Asx) + L-aspartate + ATP = L-aspartyl-tRNA(Asx) + AMP + diphosphate. Aspartyl-tRNA synthetase with relaxed tRNA specificity since it is able to aspartylate not only its cognate tRNA(Asp) but also tRNA(Asn). Reaction proceeds in two steps: L-aspartate is first activated by ATP to form Asp-AMP and then transferred to the acceptor end of tRNA(Asp/Asn). This Brachyspira hyodysenteriae (strain ATCC 49526 / WA1) protein is Aspartate--tRNA(Asp/Asn) ligase.